A 480-amino-acid polypeptide reads, in one-letter code: Glutamate--tRNA ligase (480 aa).

A 'HIGH' region motif is present at residues 21–31; it reads PSPTGYLHVGG. 4 residues coordinate Zn(2+): Cys-110, Cys-112, Cys-137, and His-139. A 'KMSKS' region motif is present at residues 248–252; that stretch reads KLSKR. An ATP-binding site is contributed by Lys-251.

The protein belongs to the class-I aminoacyl-tRNA synthetase family. Glutamate--tRNA ligase type 1 subfamily. As to quaternary structure, monomer. The cofactor is Zn(2+).

It is found in the cytoplasm. It carries out the reaction tRNA(Glu) + L-glutamate + ATP = L-glutamyl-tRNA(Glu) + AMP + diphosphate. Its function is as follows. Catalyzes the attachment of glutamate to tRNA(Glu) in a two-step reaction: glutamate is first activated by ATP to form Glu-AMP and then transferred to the acceptor end of tRNA(Glu). In Haemophilus influenzae (strain ATCC 51907 / DSM 11121 / KW20 / Rd), this protein is Glutamate--tRNA ligase.